The chain runs to 432 residues: MTRLFMLVCLGIVCQGTTGNILRGESLNKSLPILHEWKFFDYDFGSDERRQDAILSGEYDYKNNYPSDIDQWHDKIFVTMLRYNGVPSSLNVISKKVGDGGPLLQPYPDWSFAKYDDCSGIVSASKLAIDKCDRLWVLDSGLVNNTQPMCSPKLLTFDLTTSQLLKQVEIPHDVAVNATTGKGRLSSLAVQSLDCNTNSDTMVYIADEKGEGLIVYHNSDDSFHRLTSNTFDYDPKFTKMTIDGESYTAQDGISGMALSPMTNNLYYSPVASTSLYYVNTEQFRTSDYQQNDIHYEGVQNILDTQSSAKVVSKSGVLFFGLVGDSALGCWNEHRTLERHNIRTVAQSDETLQMIASMKIKEALPHVPIFDRYINREYILVLSNKMQKMVNNDFNFDDVNFRIMNANVNELILNTRCENPDNDRTPFKISIHL.

Residues 1–19 (MTRLFMLVCLGIVCQGTTG) form the signal peptide. N-linked (GlcNAc...) asparagine glycans are attached at residues asparagine 28, asparagine 144, and asparagine 177. Intrachain disulfides connect cysteine 118/cysteine 150, cysteine 132/cysteine 195, and cysteine 329/cysteine 416. Proline 364 is a 24-methylenecholesterol binding site. A Histidine amide; atypical modification is found at histidine 431. Residue leucine 432 is modified to Leucine amide; atypical.

Belongs to the major royal jelly protein family. As to quaternary structure, is present in royal jelly in different forms: monomer (55 kDa), oligomeric subunit (ca. 287-420 kDa), and water-insoluble aggregates in sediment after interaction with fatty acids. Component of the apisin heterooligomer complex consisting of 4 copies of MRJP1 and 4 copies of apisimin, associated with 8 molecules of 24-methylenecholesterol; apisimin forms a bridge connecting two MRJP1 dimers. At low pH multiple apisin octamers stack to form filaments that increase the viscosity of royal jelly; these filaments may be stabilized by bound fatty acid chains. The mandibular gland, where royal jelly is produced, has low pH conditions favouring filament formation, while the higher pH of the insect midgut favors filament disassembly. N-glycosylated on Asn-28, Asn-144 and Asn-177. Glycosylation is required to prevent apisin multimers from aggregating. In terms of processing, jellein-2 is probably processed to yield jellein-1 and jellein-4. Found in and secreted from the hypopharyngeal glands of the worker honey bee (at protein level); expression peaks at 12 days post eclosion. Expressed in the brains of worker bees (at protein level); found in antennal lobe, optical lobe and a subpopulation of Kenyon cells in the mushroom body. Found in the ommatidia of worker bees (at protein level). Expressed in the spermatheca of adult queen bees (at protein level); expression levels are higher in mated queens than in virgin queens. Expressed in queen bee ovaries and male drone testes.

It localises to the secreted. The protein resides in the cytoplasm. The protein localises to the cell projection. Its subcellular location is the rhabdomere. It is found in the cytoskeleton. In terms of biological role, most abundant protein component of royal jelly, a substance produced in the hypopharyngeal gland containing proteins, free amino acids, fatty acids, sugars and other nutrients, which is fed to developing larvae by worker nurse bees. Major royal jelly proteins (Mrjps) are high in essential amino acids and probably have a nutritional function in larval food. All larvae are fed some royal jelly (also known as worker jelly) early in their development but it forms the principal source of nutrition for larvae destined to become queen bees. Induces the differentiation of honey bee larvae into queens through an Egfr-mediated signaling pathway. Promotes body size increase by activating p70 S6 kinase, stimulates ovary development by augmenting the titer of vitellogenin (Vg) and juvenile hormone, and reduces developmental time by increasing the activity of mitogen-activated protein kinase and inducing 20-hydroxyecdysone (ecdysterone, 20E) production. Together with apisimin forms the apisin complex that polymerizes at low pH, forming a fiber network and increasing the viscosity of royal jelly. The viscous royal Jelly placed in honeycomb cells containing larvae destined to become queens acts as both a food supply and an adhesive preventing larvae from falling out; queens are reared in special large cells oriented vertically. Produced in the spermatheca of adult queen bees, along with other major royal jelly proteins, where it may act as a nutrient supply for sperm stored by mated queens, or be involved in energy metabolism. Has antibacterial activity against the Gram-positive bacteria S.aureus ATCC 6535, S.saprophyticus and B.subtilis CCT2471, and the Gram-negative bacteria E.coli CCT1371, E.cloacae ATCC 23355, K.pneumoniae ATCC 13883 and P.aeruginosa ATCC 27853, and antifungal activity against C.albicans. Lack cytolytic activity and does not induce rat peritoneal mast cell degranulation. Its function is as follows. Lacks antibacterial and antifungal activity. Lacks cytolytic activity and does not induce rat peritoneal mast cell degranulation. The polypeptide is Major royal jelly protein 1 (Apis mellifera (Honeybee)).